Here is a 300-residue protein sequence, read N- to C-terminus: MPSLTMTDSSYIGRFAPTPSGFLHFGSLVAALASWLDARAVNGRWLLRMEDTDPPREMPGARDAILQTLERYGLHWDGEVVFQSQRHDAYAAVVDRLFNMGLAYACTCSRKQLESYNGIYPGFCRNAGHAREGAAIRLRVPELIYRFTDRVQGEYQQHLGREVGDFVIQRRDGLYAYQLAVVLDDAWQGVTDIVRGADLLDNTPRQLYLQELLGFSQPRYLHIPLIVQPDGHKLGKSYRSPPLQAEHATPLLLRALRALGQETDPELLLATPAEVLAVARAQWRPEAIAQRTTVPEADLR.

L-glutamate contacts are provided by residues 14 to 18 and Glu50; that span reads RFAPT. Residues 17 to 27 carry the 'HIGH' region motif; the sequence is PTPSGFLHFGS. 4 residues coordinate Zn(2+): Cys106, Cys108, Tyr120, and Cys124. L-glutamate is bound by residues Tyr177 and Arg195. The 'KMSKS' region signature appears at 233–237; sequence KLGKS. Residue Lys236 coordinates ATP.

It belongs to the class-I aminoacyl-tRNA synthetase family. GluQ subfamily. Zn(2+) is required as a cofactor.

Functionally, catalyzes the tRNA-independent activation of glutamate in presence of ATP and the subsequent transfer of glutamate onto a tRNA(Asp). Glutamate is transferred on the 2-amino-5-(4,5-dihydroxy-2-cyclopenten-1-yl) moiety of the queuosine in the wobble position of the QUC anticodon. This is Glutamyl-Q tRNA(Asp) synthetase from Pseudomonas putida (strain ATCC 47054 / DSM 6125 / CFBP 8728 / NCIMB 11950 / KT2440).